We begin with the raw amino-acid sequence, 578 residues long: Signal peptide peptidase-like 2B (578 aa).

The signal sequence occupies residues 1-19 (MAAARLAAALLLLAAQVAC). Topologically, residues 20 to 168 (EFGVLRVVSQ…APSEPVMDYN (149 aa)) are lumenal. Positions 61–145 (LRDLSTTQLC…LLSHRDLQDI (85 aa)) constitute a PA domain. N-linked (GlcNAc...) asparagine glycosylation is found at asparagine 91 and asparagine 123. A helical membrane pass occupies residues 169–189 (MVIIFVMAVGTVAIGGYWAGS). Topologically, residues 190 to 216 (HDVKKYMKHKRDDGPEKQEDEAVDVTP) are cytoplasmic. The helical transmembrane segment at 217-237 (VMICVFVVMCCFMLVLLYYFY) threads the bilayer. Over 238–239 (DR) the chain is Lumenal. Residues 240–260 (LVYVIIGIFCLASSTGLYSCL) form a helical membrane-spanning segment. Over 261-286 (APFVRKLPFCTCRVPDNNLPYFHKRP) the chain is Cytoplasmic. Residues 287–307 (QARMLLLALFCVTVSVVWGIF) traverse the membrane as a helical segment. The Lumenal portion of the chain corresponds to 308-312 (RNEDQ). A helical membrane pass occupies residues 313-333 (WAWVLQDTLGIAFCLYMLKTI). The Cytoplasmic segment spans residues 334-341 (RLPTFKAC). Residues 342 to 362 (TLLLLVLFIYDIFFVFITPFL) form a helical membrane-spanning segment. Aspartate 352 is an active-site residue. The Lumenal portion of the chain corresponds to 363 to 405 (TKSGNSIMVEVATGPSNSSTHEKLPMVLKVPRLNTSPLSLCDR). A helical transmembrane segment spans residues 406–426 (PFSLLGFGDILVPGLLVAYCH). The active site involves aspartate 414. The Cytoplasmic portion of the chain corresponds to 427 to 438 (RFDIQVQSSRIY). Residues 439–459 (FVACTIAYGLGLLVTFVALVL) traverse the membrane as a helical segment. Topologically, residues 460 to 463 (MQRG) are lumenal. A helical membrane pass occupies residues 464-484 (QPALLYLVPCTLLTSCTVALW). Residues 465–467 (PAL) carry the PAL motif. Residues 485 to 578 (RRELGAFWTG…IPVVKPETSA (94 aa)) lie on the Cytoplasmic side of the membrane. The interval 502 to 578 (PQTPWAATQG…IPVVKPETSA (77 aa)) is disordered. A compositionally biased stretch (low complexity) spans 520 to 529 (SSLSEQPPSE).

This sequence belongs to the peptidase A22B family. As to quaternary structure, monomer. Homodimer. Interacts with ITM2B and TNF. In terms of processing, glycosylated.

It localises to the cell membrane. The protein resides in the golgi apparatus membrane. It is found in the lysosome membrane. Its subcellular location is the endosome membrane. The protein localises to the membrane. In terms of biological role, intramembrane-cleaving aspartic protease (I-CLiP) that cleaves type II membrane signal peptides in the hydrophobic plane of the membrane. Functions in ITM2B and TNF processing. Catalyzes the intramembrane cleavage of the anchored fragment of shed TNF-alpha (TNF), which promotes the release of the intracellular domain (ICD) for signaling to the nucleus. May play a role in the regulation of innate and adaptive immunity. The polypeptide is Signal peptide peptidase-like 2B (Mus musculus (Mouse)).